The following is a 630-amino-acid chain: Probable potassium transport system protein Kup (630 aa).

12 helical membrane passes run 17 to 37 (LAIA…LYSL), 51 to 71 (PSAI…VVGI), 105 to 125 (ITGL…GDAV), 144 to 164 (PQLS…LFWI), 175 to 195 (LFGP…IYHI), 218 to 238 (VLLA…AEAL), 255 to 275 (YVLV…LLLL), 283 to 303 (PFFL…STVA), 344 to 364 (IYVP…VIGF), 374 to 394 (YGIA…VVMV), 402 to 422 (LLVA…FGAN), and 428 to 448 (QGGW…MTWY).

This sequence belongs to the HAK/KUP transporter (TC 2.A.72) family.

The protein resides in the cell inner membrane. It catalyses the reaction K(+)(in) + H(+)(in) = K(+)(out) + H(+)(out). Transport of potassium into the cell. Likely operates as a K(+):H(+) symporter. The chain is Probable potassium transport system protein Kup from Burkholderia mallei (strain NCTC 10247).